A 617-amino-acid chain; its full sequence is MGPTLAVPTPYGCIGCKLPQPEYPPALIIFMFCAMVITIVVDLIGNSMVILAVTKNKKLRNSGNIFVVSLSVADMLVAIYPYPLMLHAMSIGGWDLSQLQCQMVGFITGLSVVGSIFNIVAIAINRYCYICHSLQYERIFSVRNTCIYLVITWIMTVLAVLPNMYIGTIEYDPRTYTCIFNYLNNPVFTVTIVCIHFVLPLLIVGFCYVRIWTKVLAARDPAGQNPDNQLAEVRNFLTMFVIFLLFAVCWCPINVLTVLVAVSPKEMAGKIPNWLYLAAYFIAYFNSCLNAVIYGLLNENFRREYWTIFHAMRHPIIFFSGLISDIREMQEARTLARARAHARDQAREQDRAHACPAVEETPMNVRNVPLPGDAAAGHPDRASGHPKPHSRSSSAYRKSASTHHKSVFSHSKAASGHLKPVSGHSKPASGHPKSATVYPKPASVHFKADSVHFKGDSVHFKPDSVHFKPASSNPKPITGHHVSAGSHSKSAFSAATSHPKPTTGHIKPATSHAEPTTADYPKPATTSHPKPTAADNPELSASHCPEIPAIAHPVSDDSDLPESASSPAAGPTKPAASQLESDTIADLPDPTVVTTSTNDYHDVVVIDVEDDPDEMAV.

Topologically, residues 1-30 are extracellular; the sequence is MGPTLAVPTPYGCIGCKLPQPEYPPALIIF. The helical transmembrane segment at 31–51 threads the bilayer; that stretch reads MFCAMVITIVVDLIGNSMVIL. The Cytoplasmic portion of the chain corresponds to 52 to 64; it reads AVTKNKKLRNSGN. The helical transmembrane segment at 65–85 threads the bilayer; sequence IFVVSLSVADMLVAIYPYPLM. The Extracellular segment spans residues 86–103; sequence LHAMSIGGWDLSQLQCQM. A disulfide bridge links Cys-101 with Cys-178. Residues 104–124 traverse the membrane as a helical segment; it reads VGFITGLSVVGSIFNIVAIAI. The Cytoplasmic segment spans residues 125–143; sequence NRYCYICHSLQYERIFSVR. A helical transmembrane segment spans residues 144–164; sequence NTCIYLVITWIMTVLAVLPNM. Topologically, residues 165-188 are extracellular; sequence YIGTIEYDPRTYTCIFNYLNNPVF. A helical transmembrane segment spans residues 189 to 209; the sequence is TVTIVCIHFVLPLLIVGFCYV. The Cytoplasmic portion of the chain corresponds to 210 to 239; sequence RIWTKVLAARDPAGQNPDNQLAEVRNFLTM. The chain crosses the membrane as a helical span at residues 240-260; it reads FVIFLLFAVCWCPINVLTVLV. Residues 261–273 are Extracellular-facing; that stretch reads AVSPKEMAGKIPN. Residues 274 to 294 traverse the membrane as a helical segment; it reads WLYLAAYFIAYFNSCLNAVIY. At 295–617 the chain is on the cytoplasmic side; sequence GLLNENFRRE…VEDDPDEMAV (323 aa). Disordered regions lie at residues 340–438 and 464–596; these read AHAR…ATVY and SVHF…VTTS. Residues 341–353 show a composition bias toward basic and acidic residues; the sequence is HARDQAREQDRAH. Polar residues predominate over residues 485-500; the sequence is GSHSKSAFSAATSHPK.

It belongs to the G-protein coupled receptor 1 family. As to quaternary structure, homodimer, and heterodimer with MTNR1A and MTNR1B. Interacts with KAT5. Interacts with RTN4 isoform A/NOGO-A. Interacts with TGFBR1. Interacts with GTF2I. In terms of processing, cleaved by CAPN1 in a calcium-dependent manner. Hypothalamus and pituitary.

It localises to the cell membrane. It is found in the postsynaptic density. The protein localises to the nucleus. G protein-coupled receptor that plays a role in numerous physiological processes including regulation of energy metabolism, neurite outgrowth or cell migration. Promotes self-renewal and neuronal differentiation of neural progenitor cells through activation of the NOTCH and WNT/beta-catenin signaling pathways. Modulates the KAT5-dependent glucocorticoid receptor signaling by modulating KAT5 subcellular compartmentalisation. Also plays a role in the activation TGFBR1 in the absence of TGFBR2 by interfering with FKBP1A binding to TGFBR1, leading to induction of both canonical and non-canonical SMAD signaling pathways resulting in inhibition of proliferation or promotion of migration. In terms of biological role, upon cleavage by CAPN1, functions as a scaffold in the nucleus for interacting partners such as GTF2I to promote FOS promoter activation. This is Melatonin-related receptor (GPR50) from Homo sapiens (Human).